Reading from the N-terminus, the 147-residue chain is uncharacterized protein (147 aa).

Positions Met-1–Ala-21 are cleaved as a signal peptide.

This is an uncharacterized protein from Treponema pallidum (strain Nichols).